The primary structure comprises 407 residues: Serine/threonine transporter SstT (407 aa).

The next 9 helical transmembrane spans lie at 14 to 34 (GSLV…ATVS), 48 to 68 (FVGA…AASI), 82 to 102 (IVIL…LMSF), 141 to 161 (AVIT…GLAL), 192 to 212 (IGIF…AIAG), 218 to 238 (LVLL…IVFF), 290 to 310 (IPLG…ILTL), 316 to 336 (MGIQ…GVSA), and 363 to 383 (VAMQ…SAET).

This sequence belongs to the dicarboxylate/amino acid:cation symporter (DAACS) (TC 2.A.23) family.

The protein localises to the cell inner membrane. It carries out the reaction L-serine(in) + Na(+)(in) = L-serine(out) + Na(+)(out). The catalysed reaction is L-threonine(in) + Na(+)(in) = L-threonine(out) + Na(+)(out). Involved in the import of serine and threonine into the cell, with the concomitant import of sodium (symport system). The sequence is that of Serine/threonine transporter SstT from Shewanella pealeana (strain ATCC 700345 / ANG-SQ1).